A 590-amino-acid chain; its full sequence is Vesicular glutamate transporter 3 (590 aa).

Residues 1–76 (MPLGGFAGLK…CGCFGLPKRY (76 aa)) lie on the Cytoplasmic side of the membrane. A helical membrane pass occupies residues 77-97 (IIAMLSGLGFCISFGIRCNLG). At 98 to 130 (VAIVEMVNNNTVYINGTAVMQPAQFNWDPETVG) the chain is on the vesicular side. Residues Asn106 and Asn112 are each glycosylated (N-linked (GlcNAc...) asparagine). The chain crosses the membrane as a helical span at residues 131–151 (LIHGSFFWGYIVTQIPGGFIS). Residues 152 to 153 (NK) are Cytoplasmic-facing. The chain crosses the membrane as a helical span at residues 154–174 (LAANRVFGAAIFLTSVLNMFI). Over 175-182 (PSAARVHY) the chain is Vesicular. The chain crosses the membrane as a helical span at residues 183-203 (GCVMFVRILQGLVEGVTYPAC). Over 204 to 221 (HGMWSKWAPPLERSRLAT) the chain is Cytoplasmic. Residues 222 to 242 (TSFCGSYAGAVIAMPLAGILV) form a helical membrane-spanning segment. At 243 to 249 (QYVGWPS) the chain is on the vesicular side. The chain crosses the membrane as a helical span at residues 250–270 (VFYIYGVFGIIWYIFWILLAY). Residues 271–315 (NSPAVHPTISEEERNYIETSIGEGANLMSSTEKFKTPWREFFTSM) lie on the Cytoplasmic side of the membrane. The helical transmembrane segment at 316–336 (PVYAIIVANFCRSWTFYLLLI) threads the bilayer. Residues 337–354 (SQPAYFEEVFGFPISKVG) lie on the Vesicular side of the membrane. A helical membrane pass occupies residues 355–375 (ILSAVPHMVMTIIVPIGGQLA). Residues 376–391 (DFLRSRKILSTTTVRK) lie on the Cytoplasmic side of the membrane. The helical transmembrane segment at 392 to 412 (IMNCGGFGMEATLLLVVGFSH) threads the bilayer. Over 413 to 414 (TR) the chain is Vesicular. Residues 415 to 435 (AVAISFLILAVGFSGFAISGF) traverse the membrane as a helical segment. The Cytoplasmic segment spans residues 436 to 448 (NVNHLDIAPRYAS). The chain crosses the membrane as a helical span at residues 449 to 469 (ILMGISNGVGTLSGMVCPLIV). Topologically, residues 470–482 (GALTKHKTRLEWQ) are vesicular. A helical transmembrane segment spans residues 483–503 (HVFVIASMVHYTGVIFYAIFA). The Cytoplasmic segment spans residues 504–587 (SGEKQDWADP…NHYENGEYQT (84 aa)). Positions 526 to 535 (EDELADETEP) are enriched in acidic residues. The disordered stretch occupies residues 526–590 (EDELADETEP…ENGEYQTQYQ (65 aa)). Residues 536–557 (SSDSGLATRQKTYGTTDNSSGR) are compositionally biased toward polar residues.

It belongs to the major facilitator superfamily. Sodium/anion cotransporter family. VGLUT subfamily.

Its subcellular location is the cytoplasmic vesicle. The protein resides in the secretory vesicle. It is found in the synaptic vesicle membrane. The protein localises to the cell membrane. It localises to the synapse. Its subcellular location is the synaptosome. The catalysed reaction is L-glutamate(out) = L-glutamate(in). The enzyme catalyses 3 Na(+)(out) + phosphate(out) = 3 Na(+)(in) + phosphate(in). It catalyses the reaction chloride(in) = chloride(out). The L-glutamate uniporter activity exhibits a biphasic dependence on chloride concentration. Chloride channel activity is allosterically activated by lumenal H(+) and Cl(-) leading to synaptic vesicles acidification. The glutamate transport activity is allosterically activated by lumenal H(+) and Cl(-), preventing non-vesicular L-glutamate release. Its function is as follows. Multifunctional transporter that transports L-glutamate as well as multiple ions such as chloride, sodium and phosphate. At the synaptic vesicle membrane, mainly functions as an uniporter that mediates the uptake of L-glutamate into synaptic vesicles at presynaptic nerve terminals of excitatory neural cells. The L-glutamate uniporter activity is electrogenic and is driven by the proton electrochemical gradient, mainly by the electrical gradient established by the vacuolar H(+)-ATPase across the synaptic vesicle membrane. In addition, functions as a chloride channel that allows a chloride permeation through the synaptic vesicle membrane that affects the proton electrochemical gradient and promotes synaptic vesicles acidification. At the plasma membrane, following exocytosis, functions as a symporter of Na(+) and phosphate from the extracellular space to the cytoplasm allowing synaptic phosphate homeostasis regulation. The symporter activity is electrogenic. Moreover, operates synergistically with SLC18A3/VACHT under a constant H(+) gradient, thereby allowing striatal vesicular acetylcholine uptake. This chain is Vesicular glutamate transporter 3, found in Danio rerio (Zebrafish).